Reading from the N-terminus, the 554-residue chain is Solute carrier family 22 member 1 (554 aa).

Topologically, residues 1–21 are cytoplasmic; that stretch reads MPTVDDVLEQVGEFGWFQKRT. A helical transmembrane segment spans residues 22–42; it reads FLFLCLISAILAPIYLGIVFL. Residues 43–149 are Extracellular-facing; it reads GFTPDHRCRS…LVCADAWKVD (107 aa). N-linked (GlcNAc...) asparagine glycosylation occurs at N71. The helical transmembrane segment at 150–170 threads the bilayer; sequence LFQSCVNLGFFLGSLGVGYIA. Residues 171 to 176 lie on the Cytoplasmic side of the membrane; that stretch reads DRFGRK. The helical transmembrane segment at 177–197 threads the bilayer; the sequence is LCLLLTTLINAVSGVLTAVAP. Topologically, residues 198 to 206 are extracellular; that stretch reads DYTSMLLFR. A helical transmembrane segment spans residues 207 to 229; the sequence is LLQGLVSKGSWMSGYTLITEFVG. Residues 230 to 237 are Cytoplasmic-facing; it reads SGYRRTVA. A helical transmembrane segment spans residues 238 to 258; that stretch reads ILYQVAFSVGLVALSGVAYAI. Over 259–262 the chain is Extracellular; that stretch reads PNWR. The chain crosses the membrane as a helical span at residues 263–283; sequence WLQLTVSLPTFLCLFYYWCVP. Residues 283–287 carry the Proline-rich sequence motif; that stretch reads PESPR. The Cytoplasmic segment spans residues 284 to 347; it reads ESPRWLLSQK…FRTPNLRKHT (64 aa). S333 carries the phosphoserine modification. A helical transmembrane segment spans residues 348 to 368; the sequence is FILMFLWFTCSVLYQGLILHM. Residues 369 to 374 are Extracellular-facing; sequence GATGGN. The chain crosses the membrane as a helical span at residues 375-395; it reads VYLDFFYSSLVEFPAAFVILV. Residues 396 to 402 lie on the Cytoplasmic side of the membrane; the sequence is TIDRVGR. A helical transmembrane segment spans residues 403 to 423; the sequence is IYPMAASNLAAGVASVILIFV. Residues 424 to 431 are Extracellular-facing; that stretch reads PQDLHWLT. Residues 432–452 traverse the membrane as a helical segment; the sequence is IVLSCVGRMGATIVLQMICLV. Over 453–464 the chain is Cytoplasmic; the sequence is NAELYPTFVRNL. Residues 465 to 485 traverse the membrane as a helical segment; sequence GVMVCSALCDVGGIITPFMVF. Residues 486–492 lie on the Extracellular side of the membrane; the sequence is RLMEVWQ. A helical membrane pass occupies residues 493-513; the sequence is PLPLIVFGVLGLLAGGMTLLL. The Cytoplasmic segment spans residues 514-554; it reads PETKGVALPETIEDAENLRRKAKPKESKIYLQVQTSELKGP.

It belongs to the major facilitator (TC 2.A.1) superfamily. Organic cation transporter (TC 2.A.1.19) family. In terms of processing, phosphorylated. Expressed in kidney, liver and intestine.

Its subcellular location is the basolateral cell membrane. The protein resides in the apical cell membrane. The protein localises to the lateral cell membrane. It localises to the basal cell membrane. The catalysed reaction is 1-methylnicotinamide(out) = 1-methylnicotinamide(in). The enzyme catalyses dopamine(out) = dopamine(in). It carries out the reaction serotonin(out) = serotonin(in). It catalyses the reaction (R)-adrenaline(out) = (R)-adrenaline(in). The catalysed reaction is (R)-noradrenaline(out) = (R)-noradrenaline(in). The enzyme catalyses histamine(out) = histamine(in). It carries out the reaction guanidine(out) = guanidine(in). It catalyses the reaction choline(out) = choline(in). The catalysed reaction is acetylcholine(in) = acetylcholine(out). The enzyme catalyses thiamine(in) = thiamine(out). It carries out the reaction spermidine(in) = spermidine(out). It catalyses the reaction agmatine(out) = agmatine(in). The catalysed reaction is putrescine(out) = putrescine(in). The enzyme catalyses (R)-carnitine(in) = (R)-carnitine(out). It carries out the reaction O-isobutanoyl-(R)-carnitine(in) = O-isobutanoyl-(R)-carnitine(out). It catalyses the reaction O-acetyl-(R)-carnitine(in) = O-acetyl-(R)-carnitine(out). The catalysed reaction is O-3-hydroxybutanoyl-(R)-carnitine(in) = O-3-hydroxybutanoyl-(R)-carnitine(out). The enzyme catalyses O-propanoyl-(R)-carnitine(in) = O-propanoyl-(R)-carnitine(out). It carries out the reaction O-butanoyl-(R)-carnitine(in) = O-butanoyl-(R)-carnitine(out). It catalyses the reaction O-2-methylbutanoyl-(R)-carnitine(in) = O-2-methylbutanoyl-(R)-carnitine(out). The catalysed reaction is O-3-methylbutanoyl-(R)-carnitine(in) = O-3-methylbutanoyl-(R)-carnitine(out). The enzyme catalyses O-hexanoyl-(R)-carnitine(in) = O-hexanoyl-(R)-carnitine(out). It carries out the reaction L-histidyl-L-proline diketopiperazine(in) = L-histidyl-L-proline diketopiperazine(out). It catalyses the reaction (R)-salsolinol(in) = (R)-salsolinol(out). The catalysed reaction is prostaglandin F2alpha(out) = prostaglandin F2alpha(in). The enzyme catalyses prostaglandin E2(out) = prostaglandin E2(in). With respect to regulation, phosphorylation of the transporter leads to changes in its substrate affinity, resulting in a regulation of the transport activity. In contrast with rat ortholog, ASP uptake is inhibited by protein kinase A (PKA) and C (PKC) activation. ASP uptake is also endogenously activated by calmodulin, the calmodulin-dependent kinase II and LCK tyrosine kinase. Inhibited by cGMP, most likely through a cGMP-binding protein that interacts with OCT1. In terms of biological role, electrogenic voltage-dependent transporter that mediates the transport of a variety of organic cations such as endogenous bioactive amines, cationic drugs and xenobiotics. Functions as a pH- and Na(+)-independent, bidirectional transporter. Cation cellular uptake or release is driven by the electrochemical potential (i.e. membrane potential and concentration gradient) and substrate selectivity. Hydrophobicity is a major requirement for recognition in polyvalent substrates and inhibitors. Primarily expressed in the basolateral membrane of hepatocytes and proximal tubules and involved in the uptake and disposition of cationic compounds from the blood by hepatic and renal clearance. Most likely functions as an uptake carrier in enterocytes contributing to the intestinal elimination of organic cations from the systemic circulation. Transports endogenous monoamines such as N-1-methylnicotinamide (NMN), guanidine, neurotransmitters dopamine, serotonin, noradrenaline, adrenaline and histamine, and quaternary ammonium compound such as choline. Also transports natural polyamines such as spermidine, agmatine and putrescine at low affinity, but relatively high turnover. Involved in the hepatic and intestinal uptake of the vitamin B1/thiamine, hence regulating hepatic lipid and energy metabolism. Contributes to the influx and efflux of fatty acid carriers carnitines and acylcarnitines across the basolateral membrane of hepatocytes, from the liver to the systemic circulation and inversely and may be involved in regulating the systemic availability of hepatic acylcarnitines. Also capable of transporting non-amine endogenous compounds such as prostaglandin E2 (PGE2) and prostaglandin F2-alpha (PGF2-alpha). May contribute to the transport of cationic compounds in testes across the blood-testis-barrier. Also mediates the uptake of xenobiotics tributylmethylammonium (TBuMA), quinidine, N-methyl-quinine (NMQ), N-methyl-quinidine (NMQD) N-(4,4-azo-n-pentyl)-quinuclidine (APQ), azidoprocainamide methoiodide (AMP), N-(4,4-azo-n-pentyl)-21-deoxyajmalinium (APDA) and 4-(4-(dimethylamino)styryl)-N-methylpyridinium (ASP). The sequence is that of Solute carrier family 22 member 1 (SLC22A1) from Oryctolagus cuniculus (Rabbit).